The chain runs to 212 residues: ATP phosphoribosyltransferase (212 aa).

This sequence belongs to the ATP phosphoribosyltransferase family. Short subfamily. Heteromultimer composed of HisG and HisZ subunits.

The protein localises to the cytoplasm. It catalyses the reaction 1-(5-phospho-beta-D-ribosyl)-ATP + diphosphate = 5-phospho-alpha-D-ribose 1-diphosphate + ATP. It participates in amino-acid biosynthesis; L-histidine biosynthesis; L-histidine from 5-phospho-alpha-D-ribose 1-diphosphate: step 1/9. Its function is as follows. Catalyzes the condensation of ATP and 5-phosphoribose 1-diphosphate to form N'-(5'-phosphoribosyl)-ATP (PR-ATP). Has a crucial role in the pathway because the rate of histidine biosynthesis seems to be controlled primarily by regulation of HisG enzymatic activity. This is ATP phosphoribosyltransferase from Clostridium botulinum (strain Langeland / NCTC 10281 / Type F).